The following is a 275-amino-acid chain: UPF0758 protein RL2068 (275 aa).

The disordered stretch occupies residues 1–45; the sequence is MAKGPVSTSSDDELPFETQEPIAADERSFFGGQPQKPSAPNARAA. Residues 153-275 enclose the MPN domain; the sequence is VLSSWSSVIQ…HVSLKGLKLI (123 aa). Positions 224, 226, and 237 each coordinate Zn(2+). The short motif at 224-237 is the JAMM motif element; that stretch reads HNHPSGDPTPSRAD.

Belongs to the UPF0758 family.

The sequence is that of UPF0758 protein RL2068 from Rhizobium johnstonii (strain DSM 114642 / LMG 32736 / 3841) (Rhizobium leguminosarum bv. viciae).